Reading from the N-terminus, the 237-residue chain is Leucyl/phenylalanyl-tRNA--protein transferase (237 aa).

Belongs to the L/F-transferase family.

The protein localises to the cytoplasm. The enzyme catalyses N-terminal L-lysyl-[protein] + L-leucyl-tRNA(Leu) = N-terminal L-leucyl-L-lysyl-[protein] + tRNA(Leu) + H(+). It catalyses the reaction N-terminal L-arginyl-[protein] + L-leucyl-tRNA(Leu) = N-terminal L-leucyl-L-arginyl-[protein] + tRNA(Leu) + H(+). The catalysed reaction is L-phenylalanyl-tRNA(Phe) + an N-terminal L-alpha-aminoacyl-[protein] = an N-terminal L-phenylalanyl-L-alpha-aminoacyl-[protein] + tRNA(Phe). Functions in the N-end rule pathway of protein degradation where it conjugates Leu, Phe and, less efficiently, Met from aminoacyl-tRNAs to the N-termini of proteins containing an N-terminal arginine or lysine. This chain is Leucyl/phenylalanyl-tRNA--protein transferase, found in Shewanella baltica (strain OS185).